A 172-amino-acid chain; its full sequence is Crossover junction endodeoxyribonuclease RuvC (172 aa).

Catalysis depends on residues Asp12, Glu71, and Asp143. Positions 12, 71, and 143 each coordinate Mg(2+).

The protein belongs to the RuvC family. Homodimer which binds Holliday junction (HJ) DNA. The HJ becomes 2-fold symmetrical on binding to RuvC with unstacked arms; it has a different conformation from HJ DNA in complex with RuvA. In the full resolvosome a probable DNA-RuvA(4)-RuvB(12)-RuvC(2) complex forms which resolves the HJ. It depends on Mg(2+) as a cofactor.

Its subcellular location is the cytoplasm. It catalyses the reaction Endonucleolytic cleavage at a junction such as a reciprocal single-stranded crossover between two homologous DNA duplexes (Holliday junction).. Functionally, the RuvA-RuvB-RuvC complex processes Holliday junction (HJ) DNA during genetic recombination and DNA repair. Endonuclease that resolves HJ intermediates. Cleaves cruciform DNA by making single-stranded nicks across the HJ at symmetrical positions within the homologous arms, yielding a 5'-phosphate and a 3'-hydroxyl group; requires a central core of homology in the junction. The consensus cleavage sequence is 5'-(A/T)TT(C/G)-3'. Cleavage occurs on the 3'-side of the TT dinucleotide at the point of strand exchange. HJ branch migration catalyzed by RuvA-RuvB allows RuvC to scan DNA until it finds its consensus sequence, where it cleaves and resolves the cruciform DNA. This chain is Crossover junction endodeoxyribonuclease RuvC, found in Coxiella burnetii (strain CbuG_Q212) (Coxiella burnetii (strain Q212)).